Reading from the N-terminus, the 373-residue chain is Chaperone protein DnaJ (373 aa).

Residues 5–70 enclose the J domain; the sequence is DYYEVLGLQK…EKKSNYDQFG (66 aa). Residues 132–214 form a CR-type zinc finger; it reads GVEKEITVNR…CRGNGNVRKT (83 aa). Residues C145, C148, C162, C165, C188, C191, C202, and C205 each coordinate Zn(2+). CXXCXGXG motif repeat units follow at residues 145 to 152, 162 to 169, 188 to 195, and 202 to 209; these read CEHCNGSG, CPTCSGTG, CDRCSGTG, and CTHCRGNG.

It belongs to the DnaJ family. In terms of assembly, homodimer. The cofactor is Zn(2+).

Its subcellular location is the cytoplasm. Functionally, participates actively in the response to hyperosmotic and heat shock by preventing the aggregation of stress-denatured proteins and by disaggregating proteins, also in an autonomous, DnaK-independent fashion. Unfolded proteins bind initially to DnaJ; upon interaction with the DnaJ-bound protein, DnaK hydrolyzes its bound ATP, resulting in the formation of a stable complex. GrpE releases ADP from DnaK; ATP binding to DnaK triggers the release of the substrate protein, thus completing the reaction cycle. Several rounds of ATP-dependent interactions between DnaJ, DnaK and GrpE are required for fully efficient folding. Also involved, together with DnaK and GrpE, in the DNA replication of plasmids through activation of initiation proteins. The protein is Chaperone protein DnaJ of Clostridium botulinum (strain Alaska E43 / Type E3).